Reading from the N-terminus, the 202-residue chain is LexA repressor (202 aa).

The segment at residues 28-48 (RAEIAQQLGFRSPNAAEEHLK) is a DNA-binding region (H-T-H motif). Residues Ser-119 and Lys-156 each act as for autocatalytic cleavage activity in the active site.

The protein belongs to the peptidase S24 family. Homodimer.

The catalysed reaction is Hydrolysis of Ala-|-Gly bond in repressor LexA.. Functionally, represses a number of genes involved in the response to DNA damage (SOS response), including recA and lexA. Binds to the 16 bp palindromic sequence 5'-CTGTATATATATACAG-3'. In the presence of single-stranded DNA, RecA interacts with LexA causing an autocatalytic cleavage which disrupts the DNA-binding part of LexA, leading to derepression of the SOS regulon and eventually DNA repair. This is LexA repressor from Pectobacterium carotovorum subsp. carotovorum (Erwinia carotovora subsp. carotovora).